The primary structure comprises 1088 residues: RNA-directed RNA polymerase (1088 aa).

Positions 501 to 687 (LSYGDVTRFL…AKRYIAGGKI (187 aa)) constitute a RdRp catalytic domain.

This sequence belongs to the reoviridae RNA-directed RNA polymerase family. Interacts with VP3 (Potential). Interacts with VP2; this interaction activates VP1. Interacts with NSP5; this interaction is probably necessary for the formation of functional virus factories. Interacts with NSP2; this interaction is weak. The cofactor is Mg(2+).

Its subcellular location is the virion. It catalyses the reaction RNA(n) + a ribonucleoside 5'-triphosphate = RNA(n+1) + diphosphate. Its function is as follows. RNA-directed RNA polymerase that is involved in both transcription and genome replication. Together with VP3 capping enzyme, forms an enzyme complex positioned near the channels situated at each of the five-fold vertices of the core. Following infection, the outermost layer of the virus is lost, leaving a double-layered particle (DLP) made up of the core and VP6 shell. VP1 then catalyzes the transcription of fully conservative plus-strand genomic RNAs that are extruded through the DLP's channels into the cytoplasm where they function as mRNAs for translation of viral proteins. One copy of each of the viral (+)RNAs is also recruited during core assembly, together with newly synthesized polymerase complexes and VP2. The polymerase of these novo-formed particles catalyzes the synthesis of complementary minus-strands leading to dsRNA formation. To do so, the polymerase specifically recognizes and binds 4 bases 5'-UGUG-3' in the conserved 3'-sequence of plus-strand RNA templates. VP2 presumably activates the autoinhibited VP1-RNA complex to coordinate packaging and genome replication. Once dsRNA synthesis is complete, the polymerase switches to the transcriptional mode, thus providing secondary transcription. The protein is RNA-directed RNA polymerase of Homo sapiens (Human).